A 494-amino-acid chain; its full sequence is Glutamate--tRNA ligase (494 aa).

The 'HIGH' region signature appears at 9–19 (PSPTGPLHIGS). Residues 249 to 253 (KLSKR) carry the 'KMSKS' region motif. ATP is bound at residue lysine 252.

The protein belongs to the class-I aminoacyl-tRNA synthetase family. Glutamate--tRNA ligase type 1 subfamily. As to quaternary structure, monomer.

The protein localises to the cytoplasm. The enzyme catalyses tRNA(Glu) + L-glutamate + ATP = L-glutamyl-tRNA(Glu) + AMP + diphosphate. In terms of biological role, catalyzes the attachment of glutamate to tRNA(Glu) in a two-step reaction: glutamate is first activated by ATP to form Glu-AMP and then transferred to the acceptor end of tRNA(Glu). The protein is Glutamate--tRNA ligase of Azobacteroides pseudotrichonymphae genomovar. CFP2.